The sequence spans 101 residues: Large ribosomal subunit protein uL24 (101 aa).

It belongs to the universal ribosomal protein uL24 family. Part of the 50S ribosomal subunit.

Its function is as follows. One of two assembly initiator proteins, it binds directly to the 5'-end of the 23S rRNA, where it nucleates assembly of the 50S subunit. Functionally, one of the proteins that surrounds the polypeptide exit tunnel on the outside of the subunit. The sequence is that of Large ribosomal subunit protein uL24 from Streptococcus agalactiae serotype III (strain NEM316).